A 92-amino-acid chain; its full sequence is MLCAVYKSSRKADTYLFVKKRDCFDDVPAPLMEMFGVPKLVMVFPIAKRDALGMADIQKVRAAMEENGFYLQIPPPQVNLLAEHKLSLGIKD.

The YcgL domain maps to 1 to 85 (MLCAVYKSSR…PQVNLLAEHK (85 aa)).

In Shewanella baltica (strain OS155 / ATCC BAA-1091), this protein is YcgL domain-containing protein Sbal_1869.